We begin with the raw amino-acid sequence, 130 residues long: Small ribosomal subunit protein uS11 (130 aa).

Belongs to the universal ribosomal protein uS11 family. In terms of assembly, part of the 30S ribosomal subunit. Interacts with proteins S7 and S18. Binds to IF-3.

Located on the platform of the 30S subunit, it bridges several disparate RNA helices of the 16S rRNA. Forms part of the Shine-Dalgarno cleft in the 70S ribosome. This chain is Small ribosomal subunit protein uS11, found in Xanthomonas campestris pv. campestris (strain B100).